The sequence spans 139 residues: MGQTIRFGVSLNSELLEKFDALCDEKSYQTRSEAIRDLIRGVLVQKEWEQSDKEVAGVLTLVYDHHTSDLAQRLIETQHEQHDVILSSMHVHLDHHNCLEALVLKGPGEAVQRLSQKLISTRGVKYGKLTLATTGQEIV.

The Ni(2+) site is built by His79, His90, His92, and Cys98.

The protein belongs to the transcriptional regulatory CopG/NikR family. Ni(2+) is required as a cofactor.

Transcriptional regulator. This chain is Putative nickel-responsive regulator, found in Solidesulfovibrio magneticus (strain ATCC 700980 / DSM 13731 / RS-1) (Desulfovibrio magneticus).